The primary structure comprises 475 residues: Aspartyl/glutamyl-tRNA(Asn/Gln) amidotransferase subunit B (475 aa).

The protein belongs to the GatB/GatE family. GatB subfamily. In terms of assembly, heterotrimer of A, B and C subunits.

The enzyme catalyses L-glutamyl-tRNA(Gln) + L-glutamine + ATP + H2O = L-glutaminyl-tRNA(Gln) + L-glutamate + ADP + phosphate + H(+). The catalysed reaction is L-aspartyl-tRNA(Asn) + L-glutamine + ATP + H2O = L-asparaginyl-tRNA(Asn) + L-glutamate + ADP + phosphate + 2 H(+). Its function is as follows. Allows the formation of correctly charged Asn-tRNA(Asn) or Gln-tRNA(Gln) through the transamidation of misacylated Asp-tRNA(Asn) or Glu-tRNA(Gln) in organisms which lack either or both of asparaginyl-tRNA or glutaminyl-tRNA synthetases. The reaction takes place in the presence of glutamine and ATP through an activated phospho-Asp-tRNA(Asn) or phospho-Glu-tRNA(Gln). This Thermoanaerobacter pseudethanolicus (strain ATCC 33223 / 39E) (Clostridium thermohydrosulfuricum) protein is Aspartyl/glutamyl-tRNA(Asn/Gln) amidotransferase subunit B.